The primary structure comprises 901 residues: HTH-type transcriptional regulator MalT (901 aa).

39–46 (SPAGYGKT) contributes to the ATP binding site. An HTH luxR-type domain is found at 829–894 (ELIRTSPLTQ…DAVQHAQQLL (66 aa)). A DNA-binding region (H-T-H motif) is located at residues 853–872 (NEQIAGELAVAATTIKTHIR).

The protein belongs to the MalT family. As to quaternary structure, monomer in solution. Oligomerizes to an active state in the presence of the positive effectors ATP and maltotriose.

Activated by ATP and maltotriose, which are both required for DNA binding. Its function is as follows. Positively regulates the transcription of the maltose regulon whose gene products are responsible for uptake and catabolism of malto-oligosaccharides. Specifically binds to the promoter region of its target genes, recognizing a short DNA motif called the MalT box. The chain is HTH-type transcriptional regulator MalT from Salmonella typhimurium (strain LT2 / SGSC1412 / ATCC 700720).